The chain runs to 257 residues: Dihydroorotate dehydrogenase B (NAD(+)), electron transfer subunit (257 aa).

In terms of domain architecture, FAD-binding FR-type spans 2 to 101 (IRQEKMRVVS…LGPIGNGFPV (100 aa)). FAD contacts are provided by residues 52–55 (RPIS), 69–71 (IYR), and 76–77 (GT). Positions 220, 225, 228, and 244 each coordinate [2Fe-2S] cluster.

This sequence belongs to the PyrK family. In terms of assembly, heterotetramer of 2 PyrK and 2 PyrD type B subunits. [2Fe-2S] cluster serves as cofactor. Requires FAD as cofactor.

Its pathway is pyrimidine metabolism; UMP biosynthesis via de novo pathway; orotate from (S)-dihydroorotate (NAD(+) route): step 1/1. Its function is as follows. Responsible for channeling the electrons from the oxidation of dihydroorotate from the FMN redox center in the PyrD type B subunit to the ultimate electron acceptor NAD(+). This Lysinibacillus sphaericus (strain C3-41) protein is Dihydroorotate dehydrogenase B (NAD(+)), electron transfer subunit.